The following is a 339-amino-acid chain: Phosphate acyltransferase (339 aa).

It belongs to the PlsX family. As to quaternary structure, homodimer. Probably interacts with PlsY.

Its subcellular location is the cytoplasm. It catalyses the reaction a fatty acyl-[ACP] + phosphate = an acyl phosphate + holo-[ACP]. It functions in the pathway lipid metabolism; phospholipid metabolism. Its function is as follows. Catalyzes the reversible formation of acyl-phosphate (acyl-PO(4)) from acyl-[acyl-carrier-protein] (acyl-ACP). This enzyme utilizes acyl-ACP as fatty acyl donor, but not acyl-CoA. The sequence is that of Phosphate acyltransferase from Ruthia magnifica subsp. Calyptogena magnifica.